A 185-amino-acid chain; its full sequence is Protein LPA2 (185 aa).

The transit peptide at M1–R46 directs the protein to the chloroplast. Residues Q35 to K105 are disordered. The segment covering S47–S75 has biased composition (low complexity). A compositionally biased stretch (basic and acidic residues) spans K83 to V92. Helical transmembrane passes span A115–A135 and V152–V172.

It is found in the plastid. It localises to the chloroplast membrane. The sequence is that of Protein LPA2 from Arabidopsis thaliana (Mouse-ear cress).